The chain runs to 363 residues: Pulmonary surfactant-associated protein B (363 aa).

An N-terminal signal peptide occupies residues 1–16 (LLWLLLLPTLCGLGAA). A propeptide spanning residues 17–180 (DWSAPSLACA…PHTQDLSEQQ (164 aa)) is cleaved from the precursor. Positions 18–58 (WSAPSLACARGPAFWCQSLEQALQCRALGHCLQEVWGNARA) constitute a Saposin A-type domain. Saposin B-type domains lie at 58 to 140 (ADDL…KPGL), 184 to 261 (PLPY…SHED), and 277 to 352 (QESK…RTTF). 9 disulfides stabilise this stretch: cysteine 62–cysteine 136, cysteine 65–cysteine 130, cysteine 93–cysteine 105, cysteine 188–cysteine 257, cysteine 191–cysteine 251, cysteine 215–cysteine 226, cysteine 281–cysteine 348, cysteine 284–cysteine 342, and cysteine 307–cysteine 317. Residues 260–363 (EDSAGPALAS…PLQCIHIPHF (104 aa)) constitute a propeptide that is removed on maturation. Asparagine 293 carries N-linked (GlcNAc...) asparagine glycosylation.

In terms of assembly, homodimer; disulfide-linked.

The protein localises to the secreted. It localises to the extracellular space. The protein resides in the surface film. Functionally, pulmonary surfactant-associated proteins promote alveolar stability by lowering the surface tension at the air-liquid interface in the peripheral air spaces. SP-B increases the collapse pressure of palmitic acid to nearly 70 millinewtons per meter. The protein is Pulmonary surfactant-associated protein B (SFTPB) of Canis lupus familiaris (Dog).